The primary structure comprises 631 residues: Chaperone protein DnaK (631 aa).

Thr-175 bears the Phosphothreonine; by autocatalysis mark. Residues 586-631 (GAEGAAAGAGAAGAAGAGASAGSASGSDDDTVEAEVVDDDDDKDNK) form a disordered region. Positions 602 to 611 (AGASAGSASG) are enriched in low complexity. A compositionally biased stretch (acidic residues) spans 612 to 631 (SDDDTVEAEVVDDDDDKDNK).

The protein belongs to the heat shock protein 70 family.

Its function is as follows. Acts as a chaperone. The protein is Chaperone protein DnaK of Bifidobacterium longum subsp. infantis (strain ATCC 15697 / DSM 20088 / JCM 1222 / NCTC 11817 / S12).